We begin with the raw amino-acid sequence, 223 residues long: N-terminal Xaa-Pro-Lys N-methyltransferase 1 (223 aa).

At methionine 1 the chain carries N-acetylmethionine. The residue at position 2 (threonine 2) is an N-acetylthreonine; in N-terminal Xaa-Pro-Lys N-methyltransferase 1, N-terminally processed. Residues glycine 69, arginine 74, 91-93 (DIT), 119-120 (LQ), and glutamine 135 contribute to the S-adenosyl-L-methionine site.

This sequence belongs to the methyltransferase superfamily. NTM1 family.

It is found in the nucleus. The catalysed reaction is N-terminal L-alanyl-L-prolyl-L-lysyl-[protein] + 3 S-adenosyl-L-methionine = N-terminal N,N,N-trimethyl-L-alanyl-L-prolyl-L-lysyl-[protein] + 3 S-adenosyl-L-homocysteine + 3 H(+). It catalyses the reaction N-terminal L-seryl-L-prolyl-L-lysyl-[protein] + 3 S-adenosyl-L-methionine = N-terminal N,N,N-trimethyl-L-seryl-L-prolyl-L-lysyl-[protein] + 3 S-adenosyl-L-homocysteine + 3 H(+). It carries out the reaction N-terminal L-prolyl-L-prolyl-L-lysyl-[protein] + 2 S-adenosyl-L-methionine = N-terminal N,N-dimethyl-L-prolyl-L-prolyl-L-lysyl-[protein] + 2 S-adenosyl-L-homocysteine + 2 H(+). In terms of biological role, distributive alpha-N-methyltransferase that methylates the N-terminus of target proteins containing the N-terminal motif [Ala/Gly/Pro/Ser]-Pro-Lys when the initiator Met is cleaved. Specifically catalyzes mono-, di- or tri-methylation of the exposed alpha-amino group of the Ala, Gly or Ser residue in the [Ala/Gly/Ser]-Pro-Lys motif and mono- or di-methylation of Pro in the Pro-Pro-Lys motif. Some of the substrates may be primed by NTMT2-mediated monomethylation. Catalyzes the trimethylation of the N-terminal Gly in CENPA (after removal of Met-1). Responsible for the N-terminal methylation of KLHL31, MYL2, MYL3, RB1, RCC1, RPL23A and SET. Required during mitosis for normal bipolar spindle formation and chromosome segregation via its action on RCC1. The protein is N-terminal Xaa-Pro-Lys N-methyltransferase 1 (NTMT1) of Homo sapiens (Human).